We begin with the raw amino-acid sequence, 205 residues long: Probable GTP-binding protein EngB (205 aa).

Residues 27–201 form the EngB-type G domain; that stretch reads TGIEIAFAGR…AVKLDFWFSP (175 aa). GTP contacts are provided by residues 35 to 42, 62 to 66, 80 to 83, 147 to 150, and 180 to 182; these read GRSNAGKS, GRTQL, DLPG, TKAD, and FSA. Residues Ser-42 and Thr-64 each contribute to the Mg(2+) site.

This sequence belongs to the TRAFAC class TrmE-Era-EngA-EngB-Septin-like GTPase superfamily. EngB GTPase family. It depends on Mg(2+) as a cofactor.

Its function is as follows. Necessary for normal cell division and for the maintenance of normal septation. This chain is Probable GTP-binding protein EngB, found in Haemophilus influenzae (strain PittGG).